A 284-amino-acid polypeptide reads, in one-letter code: L-ribulose-5-phosphate 3-epimerase UlaE (284 aa).

It belongs to the L-ribulose-5-phosphate 3-epimerase family.

It carries out the reaction L-ribulose 5-phosphate = L-xylulose 5-phosphate. It functions in the pathway cofactor degradation; L-ascorbate degradation; D-xylulose 5-phosphate from L-ascorbate: step 3/4. Its function is as follows. Catalyzes the isomerization of L-xylulose-5-phosphate to L-ribulose-5-phosphate. Is involved in the anaerobic L-ascorbate utilization. The chain is L-ribulose-5-phosphate 3-epimerase UlaE from Escherichia coli O127:H6 (strain E2348/69 / EPEC).